The sequence spans 100 residues: Noncompact myelin-associated protein (100 aa).

Over 1-28 (MTTATTLGDAVFSLNMTRGEDALYKSSG) the chain is Extracellular. Residues 29–49 (AIVAAIVVVVIIIVTLVLILL) traverse the membrane as a helical segment. The Cytoplasmic portion of the chain corresponds to 50-100 (KMYNRRMRTRRELEPKSPKPPVPPALDPSSNGSQQPATVTFDPANVHVETR). The disordered stretch occupies residues 58–100 (TRRELEPKSPKPPVPPALDPSSNGSQQPATVTFDPANVHVETR).

In terms of processing, glycosylated. In terms of tissue distribution, found in the peripheral nervous system (PNS) Schwann cells (at protein level). Expressed in the PNS, primarily limited to Schwann cells.

It localises to the cell membrane. Functionally, plays a role in myelin formation. In Mus musculus (Mouse), this protein is Noncompact myelin-associated protein (Ncmap).